Here is a 206-residue protein sequence, read N- to C-terminus: Uracil phosphoribosyltransferase (206 aa).

5-phospho-alpha-D-ribose 1-diphosphate contacts are provided by residues Arg-76, Arg-101, and Asp-128–Thr-136. Uracil-binding positions include Ile-191 and Gly-196 to Ala-198. 5-phospho-alpha-D-ribose 1-diphosphate is bound at residue Asp-197.

It belongs to the UPRTase family. Mg(2+) is required as a cofactor.

It catalyses the reaction UMP + diphosphate = 5-phospho-alpha-D-ribose 1-diphosphate + uracil. The protein operates within pyrimidine metabolism; UMP biosynthesis via salvage pathway; UMP from uracil: step 1/1. Allosterically activated by GTP. Its function is as follows. Catalyzes the conversion of uracil and 5-phospho-alpha-D-ribose 1-diphosphate (PRPP) to UMP and diphosphate. The sequence is that of Uracil phosphoribosyltransferase from Mycoplasma genitalium (strain ATCC 33530 / DSM 19775 / NCTC 10195 / G37) (Mycoplasmoides genitalium).